The sequence spans 267 residues: Tryptophan synthase alpha chain (267 aa).

Catalysis depends on proton acceptor residues E49 and D60.

This sequence belongs to the TrpA family. In terms of assembly, tetramer of two alpha and two beta chains.

The enzyme catalyses (1S,2R)-1-C-(indol-3-yl)glycerol 3-phosphate + L-serine = D-glyceraldehyde 3-phosphate + L-tryptophan + H2O. It participates in amino-acid biosynthesis; L-tryptophan biosynthesis; L-tryptophan from chorismate: step 5/5. Its function is as follows. The alpha subunit is responsible for the aldol cleavage of indoleglycerol phosphate to indole and glyceraldehyde 3-phosphate. The polypeptide is Tryptophan synthase alpha chain (Cyanothece sp. (strain PCC 7425 / ATCC 29141)).